We begin with the raw amino-acid sequence, 887 residues long: Exosome complex component 10 (887 aa).

Residues 1 to 10 (MAPPSPREHQ) show a composition bias toward basic and acidic residues. Residues 1-23 (MAPPSPREHQSAPATSATKPDAE) form a disordered region. Lysine 19 participates in a covalent cross-link: Glycyl lysine isopeptide (Lys-Gly) (interchain with G-Cter in SUMO2). One can recognise a 3'-5' exonuclease domain in the interval 289 to 455 (HLVSSLDELV…YIYDRMRLEL (167 aa)). 4 residues coordinate Mg(2+): aspartate 313, glutamate 315, aspartate 371, and aspartate 440. An HRDC domain is found at 503–583 (NSQQLTAFQL…QQAREMPLLK (81 aa)). Lysine 583 participates in a covalent cross-link: Glycyl lysine isopeptide (Lys-Gly) (interchain with G-Cter in SUMO1); alternate. A Glycyl lysine isopeptide (Lys-Gly) (interchain with G-Cter in SUMO2); alternate cross-link involves residue lysine 583. Lysine 710 participates in a covalent cross-link: Glycyl lysine isopeptide (Lys-Gly) (interchain with G-Cter in SUMO2). 2 disordered regions span residues 734–757 (KEPKEATKKKVAEQTAAREEAKEE) and 777–887 (NATK…WPKR). Residues 778-796 (ATKKRERATSDLRTIEQKQ) show a composition bias toward basic and acidic residues. Serine 823 is modified (phosphoserine). Residues lysine 835, lysine 861, and lysine 875 each participate in a glycyl lysine isopeptide (Lys-Gly) (interchain with G-Cter in SUMO2) cross-link.

Belongs to the exosome component 10/RRP6 family. As to quaternary structure, component of the RNA exosome complex. The catalytically inactive RNA exosome core complex (Exo-9) associates with the catalytic subunit EXOSC10/RRP6 (via its N-terminus). Exo-9 may associate with DIS3 to form the nucleolar exosome complex, or DIS3L to form the cytoplasmic exosome complex. The RNA exosome complex interacts with cofactors C1D/RRP47, MPHOSPH6/MPP6 and MTREX/MTR4. Interacts with MTREX; the interaction with MTREX mediates the association of MTREX with nuclear RNA exosomes. Part of the small subunit (SSU) processome, composed of more than 70 proteins and the RNA chaperone small nucleolar RNA (snoRNA) U3. Interacts with ALYREF/THOC4. Interacts with DHX36; this interaction occurs in a RNase-insensitive manner. Interacts with NRDE2. Interacts (via C-terminus) with USP36 (via C-terminus); the interaction is facilitated by the association with RNA and promotes sumoylation of EXOSC10. It depends on Mg(2+) as a cofactor. Post-translationally, sumoylated by USP36; sumoylation does not significantly affect EXOSC10 nucleolar localization and association with core exosome and USP36, but regulates the nucleolar RNA exosome activity in rRNA processing by promoting binding of EXOSC10 to pre-rRNAs. Effects of sumoylation on EXOSC10 levels vary between different studies. Sumoylation of EXOSC10 is required for the modulation of EXOSC10 effects on cellular protein translation and cell proliferation. Sumoylation is promoted by mild hypothermia. Expressed in ovary (at protein level). Expressed in testis (at protein level). Expressed in lung (at protein level).

The protein resides in the cytoplasm. Its subcellular location is the nucleus. It localises to the nucleolus. The protein localises to the nucleoplasm. Its function is as follows. Catalytic component of the RNA exosome complex which has 3'-&gt;5' exoribonuclease activity and participates in a multitude of cellular RNA processing and degradation events. In the nucleus, the RNA exosome complex is involved in proper maturation of stable RNA species such as rRNA, snRNA and snoRNA, in the elimination of RNA processing by-products and non-coding 'pervasive' transcripts, such as antisense RNA species and promoter-upstream transcripts (PROMPTs), and of mRNAs with processing defects, thereby limiting or excluding their export to the cytoplasm. Part of the small subunit (SSU) processome, first precursor of the small eukaryotic ribosomal subunit. During the assembly of the SSU processome in the nucleolus, many ribosome biogenesis factors, an RNA chaperone and ribosomal proteins associate with the nascent pre-rRNA and work in concert to generate RNA folding, modifications, rearrangements and cleavage as well as targeted degradation of pre-ribosomal RNA by the RNA exosome. The RNA exosome may be involved in Ig class switch recombination (CSR) and/or Ig variable region somatic hypermutation (SHM) by targeting AICDA deamination activity to transcribed dsDNA substrates. In the cytoplasm, the RNA exosome complex is involved in general mRNA turnover and specifically degrades inherently unstable mRNAs containing AU-rich elements (AREs) within their 3' untranslated regions, and in RNA surveillance pathways, preventing translation of aberrant mRNAs. It seems to be involved in degradation of histone mRNA. EXOSC10 is required for nucleolar localization of C1D and probably mediates the association of MTREX, C1D and MPHOSPH6 with the RNA exosome involved in the maturation of 5.8S rRNA. Plays a role in the recruitment of replication protein A complex (RPA) and RAD51 to DNA double-strand breaks caused by irradiation, contributing to DNA repair by homologous recombination. Regulates levels of damage-induced RNAs in order to prevent DNA-RNA hybrid formation at DNA double-strand breaks and limit DNA end resection after damage. Plays a role in oocyte development, maturation and survival. Required for normal testis development and mitotic division of spermatogonia. Plays a role in proper embryo development. Required for global protein translation. Required for cell proliferation. This Mus musculus (Mouse) protein is Exosome complex component 10 (Exosc10).